The chain runs to 110 residues: Large ribosomal subunit protein eL34 (110 aa).

The disordered stretch occupies residues 1 to 41 (MKNVLIHKGATYKTRSNRRRKVRTPSGKLVNRRVKKHSKKH). A compositionally biased stretch (basic residues) spans 30-41 (VNRRVKKHSKKH).

It belongs to the eukaryotic ribosomal protein eL34 family.

This chain is Large ribosomal subunit protein eL34 (RPL34), found in Encephalitozoon cuniculi (strain GB-M1) (Microsporidian parasite).